Here is a 52-residue protein sequence, read N- to C-terminus: NADH dehydrogenase [ubiquinone] 1 alpha subcomplex subunit 4 homolog (52 aa).

Residues 14–30 (LYPLGAAVATAVGFATY) form a helical membrane-spanning segment.

Belongs to the complex I NDUFA4 subunit family.

Its subcellular location is the mitochondrion inner membrane. In terms of biological role, accessory subunit of the mitochondrial membrane respiratory chain NADH dehydrogenase (Complex I), that is believed to be not involved in catalysis. Complex I functions in the transfer of electrons from NADH to the respiratory chain. The immediate electron acceptor for the enzyme is believed to be ubiquinone. This Schizosaccharomyces pombe (strain 972 / ATCC 24843) (Fission yeast) protein is NADH dehydrogenase [ubiquinone] 1 alpha subcomplex subunit 4 homolog.